The following is a 680-amino-acid chain: DNA-directed RNA polymerase subunit beta' (680 aa).

Residues C69, C71, C87, and C90 each contribute to the Zn(2+) site. Mg(2+)-binding residues include D489, D491, and D493.

The protein belongs to the RNA polymerase beta' chain family. RpoC1 subfamily. In plastids the minimal PEP RNA polymerase catalytic core is composed of four subunits: alpha, beta, beta', and beta''. When a (nuclear-encoded) sigma factor is associated with the core the holoenzyme is formed, which can initiate transcription. It depends on Mg(2+) as a cofactor. Zn(2+) serves as cofactor.

Its subcellular location is the plastid. The protein resides in the chloroplast. The enzyme catalyses RNA(n) + a ribonucleoside 5'-triphosphate = RNA(n+1) + diphosphate. Functionally, DNA-dependent RNA polymerase catalyzes the transcription of DNA into RNA using the four ribonucleoside triphosphates as substrates. This Draba nemorosa (Woodland whitlowgrass) protein is DNA-directed RNA polymerase subunit beta'.